A 142-amino-acid chain; its full sequence is Hemoglobin subunit alpha (142 aa).

Residues 2–142 (VLSAADKNNV…VSTVLTSKYR (141 aa)) form the Globin domain. At Ser-4 the chain carries Phosphoserine. 2 positions are modified to N6-succinyllysine: Lys-8 and Lys-12. N6-acetyllysine; alternate is present on Lys-17. Lys-17 is modified (N6-succinyllysine; alternate). At Tyr-25 the chain carries Phosphotyrosine. Ser-36 carries the phosphoserine modification. Lys-41 bears the N6-succinyllysine mark. Ser-50 is modified (phosphoserine). O2 is bound at residue His-59. Heme b is bound at residue His-88. Thr-109 carries the phosphothreonine modification. Residues Ser-125 and Ser-132 each carry the phosphoserine modification. Residues Thr-135 and Thr-138 each carry the phosphothreonine modification. Ser-139 is subject to Phosphoserine.

Belongs to the globin family. As to quaternary structure, heterotetramer of two alpha chains and two beta chains. In terms of tissue distribution, red blood cells.

Functionally, involved in oxygen transport from the lung to the various peripheral tissues. Its function is as follows. Hemopressin acts as an antagonist peptide of the cannabinoid receptor CNR1. Hemopressin-binding efficiently blocks cannabinoid receptor CNR1 and subsequent signaling. In Cavia porcellus (Guinea pig), this protein is Hemoglobin subunit alpha (HBA).